We begin with the raw amino-acid sequence, 180 residues long: MPLLNSVTTPYAEALLQVVNENLQTEEMVSEVKQLLELLNDSPELEKALSSPILETEAKKKIIIEIFSNKVNSSLLNFLKLLADRQRIGILTSILNRFLEIYRENSNIALATVTSAVELTDEQKGLITQKIVNIAGTQKLELVTKIDPSLIGGFVASVGSKVIDASLASQIRKLGLSLSK.

This sequence belongs to the ATPase delta chain family. F-type ATPases have 2 components, F(1) - the catalytic core - and F(0) - the membrane proton channel. F(1) has five subunits: alpha(3), beta(3), gamma(1), delta(1), epsilon(1). CF(0) has four main subunits: a(1), b(1), b'(1) and c(10-14). The alpha and beta chains form an alternating ring which encloses part of the gamma chain. F(1) is attached to F(0) by a central stalk formed by the gamma and epsilon chains, while a peripheral stalk is formed by the delta, b and b' chains.

It localises to the cellular thylakoid membrane. Its function is as follows. F(1)F(0) ATP synthase produces ATP from ADP in the presence of a proton or sodium gradient. F-type ATPases consist of two structural domains, F(1) containing the extramembraneous catalytic core and F(0) containing the membrane proton channel, linked together by a central stalk and a peripheral stalk. During catalysis, ATP synthesis in the catalytic domain of F(1) is coupled via a rotary mechanism of the central stalk subunits to proton translocation. Functionally, this protein is part of the stalk that links CF(0) to CF(1). It either transmits conformational changes from CF(0) to CF(1) or is implicated in proton conduction. This chain is ATP synthase subunit delta, found in Prochlorococcus marinus (strain MIT 9312).